Consider the following 162-residue polypeptide: Phosphopantetheine adenylyltransferase (162 aa).

Position 10 (T10) interacts with substrate. ATP is bound by residues 10-11 (TF) and H18. Positions 42, 74, and 88 each coordinate substrate. ATP is bound by residues 89–91 (GLR), E99, and 124–130 (YAFLSST).

It belongs to the bacterial CoaD family. Homohexamer. Mg(2+) is required as a cofactor.

The protein resides in the cytoplasm. It catalyses the reaction (R)-4'-phosphopantetheine + ATP + H(+) = 3'-dephospho-CoA + diphosphate. The protein operates within cofactor biosynthesis; coenzyme A biosynthesis; CoA from (R)-pantothenate: step 4/5. Its function is as follows. Reversibly transfers an adenylyl group from ATP to 4'-phosphopantetheine, yielding dephospho-CoA (dPCoA) and pyrophosphate. This chain is Phosphopantetheine adenylyltransferase, found in Aliivibrio fischeri (strain ATCC 700601 / ES114) (Vibrio fischeri).